We begin with the raw amino-acid sequence, 333 residues long: Phosphoribosylformylglycinamidine cyclo-ligase (333 aa).

It belongs to the AIR synthase family.

The protein resides in the cytoplasm. The catalysed reaction is 2-formamido-N(1)-(5-O-phospho-beta-D-ribosyl)acetamidine + ATP = 5-amino-1-(5-phospho-beta-D-ribosyl)imidazole + ADP + phosphate + H(+). The protein operates within purine metabolism; IMP biosynthesis via de novo pathway; 5-amino-1-(5-phospho-D-ribosyl)imidazole from N(2)-formyl-N(1)-(5-phospho-D-ribosyl)glycinamide: step 2/2. The protein is Phosphoribosylformylglycinamidine cyclo-ligase of Methanosarcina barkeri (strain Fusaro / DSM 804).